Consider the following 644-residue polypeptide: Pesticidal crystal protein Cry3Aa (644 aa).

A compositionally biased stretch (basic and acidic residues) spans 1–13 (MNPNNRSEHDTIK). Residues 1–20 (MNPNNRSEHDTIKTTENNEV) form a disordered region. Residues 1–57 (MNPNNRSEHDTIKTTENNEVPTNHVQYPLAETPNPTLEDLNYKEFLRMTADNNTEAL) constitute a propeptide, removed in mature form.

The protein belongs to the delta endotoxin family.

Functionally, promotes colloidosmotic lysis by binding to the midgut epithelial cells of Coleoptera. The chain is Pesticidal crystal protein Cry3Aa (cry3Aa) from Bacillus thuringiensis subsp. san diego.